The following is a 110-amino-acid chain: Large ribosomal subunit protein uL22 (110 aa).

It belongs to the universal ribosomal protein uL22 family. Part of the 50S ribosomal subunit.

In terms of biological role, this protein binds specifically to 23S rRNA; its binding is stimulated by other ribosomal proteins, e.g. L4, L17, and L20. It is important during the early stages of 50S assembly. It makes multiple contacts with different domains of the 23S rRNA in the assembled 50S subunit and ribosome. Its function is as follows. The globular domain of the protein is located near the polypeptide exit tunnel on the outside of the subunit, while an extended beta-hairpin is found that lines the wall of the exit tunnel in the center of the 70S ribosome. The chain is Large ribosomal subunit protein uL22 from Colwellia psychrerythraea (strain 34H / ATCC BAA-681) (Vibrio psychroerythus).